A 312-amino-acid polypeptide reads, in one-letter code: Envelope glycoprotein K (312 aa).

The signal sequence occupies residues 1–20 (MLLGGRPLHLLVLGVMGAYA). The Extracellular portion of the chain corresponds to 21–91 (GLGAYYATVA…VVYARRDCRA (71 aa)). N-linked (GlcNAc...) asparagine; by host glycosylation is found at N58 and N67. A helical transmembrane segment spans residues 92–112 (YLWDVHFRLAAVAWLLYAAFV). Topologically, residues 113–187 (YARQERRMFG…DPITLAHRHP (75 aa)) are cytoplasmic. The chain crosses the membrane as a helical span at residues 188 to 208 (TLIALILLELGLRLGARMALF). Topologically, residues 209 to 227 (TTLGVTRAPCALVFPLYAR) are extracellular. A helical transmembrane segment spans residues 228-248 (ALVWIFVLAVGALELLAATLP). At 249–280 (HIARVSGATATPARSDGGRAALGVCGACCSTV) the chain is on the cytoplasmic side. Residues 281–301 (LAGIFAKALYLCLLVGGVLLF) form a helical membrane-spanning segment. The Extracellular segment spans residues 302-312 (LHYERHITIFG).

The protein belongs to the alphaherpesvirinae glycoprotein K family. Interacts (via UL20 interaction region) with protein UL20 homolog (via N-terminus); this interaction probably plays a role in the coordinate transport of protein UL20 homolog and gK to the trans-Golgi network (TGN), and is required for the cell surface expression of gK. In terms of processing, N-glycosylated.

It is found in the host cell membrane. It localises to the host endosome membrane. The protein resides in the host Golgi apparatus membrane. Functionally, glycoprotein that probably modulates membrane fusion events during secondary envelopment of cytoplasmic capsids that bud into specific trans-Golgi network (TGN)-derived membranes. The polypeptide is Envelope glycoprotein K (gK) (Sus scrofa (Pig)).